The following is a 154-amino-acid chain: Heat shock protein beta-3 (154 aa).

A disordered region spans residues 48-71 (ARGAGTPQALAEDSASTEKPPGEG). One can recognise a sHSP domain in the interval 57 to 154 (LAEDSASTEK…VEVKDSLGTK (98 aa)).

Belongs to the small heat shock protein (HSP20) family.

Its subcellular location is the cytoplasm. It localises to the nucleus. In terms of biological role, inhibitor of actin polymerization. The sequence is that of Heat shock protein beta-3 (Hspb3) from Mus musculus (Mouse).